The following is a 558-amino-acid chain: INCREASED PETAL GROWTH ANISOTROPY 1-like protein 2 (558 aa).

Residues 1–15 (MSRISTTSTTPSRVR) show a composition bias toward low complexity. The tract at residues 1–54 (MSRISTTSTTPSRVRAANSHYSVISKPRAQDDNGLTGGKPKSSGYDVKNDPAKR) is disordered. Residues 104–180 (VMATAAAEDE…EAKISSLSSN (77 aa)) adopt a coiled-coil conformation. The tract at residues 207 to 285 (KVKKEVAVES…AARAQKSPPV (79 aa)) is disordered. Pro residues-rich tracts occupy residues 221–236 (PPSP…PPLP) and 256–272 (FAPP…PPRP). The stretch at 392–448 (KADTLQEAAVEYRELKKLEKELSSYSDDPNIHYGVALKKMANLLDKSEQRIRRLVRL) forms a coiled coil.

It belongs to the IPGA1 family.

The protein localises to the cytoplasm. Its subcellular location is the cytoskeleton. Functionally, microtubule-associated protein probably involved in the regulation of microtubule organization. The protein is INCREASED PETAL GROWTH ANISOTROPY 1-like protein 2 of Arabidopsis thaliana (Mouse-ear cress).